A 72-amino-acid polypeptide reads, in one-letter code: Small ribosomal subunit protein bS18c (72 aa).

The protein belongs to the bacterial ribosomal protein bS18 family. As to quaternary structure, part of the 30S ribosomal subunit.

The protein resides in the plastid. It is found in the chloroplast. The sequence is that of Small ribosomal subunit protein bS18c from Emiliania huxleyi (Coccolithophore).